We begin with the raw amino-acid sequence, 87 residues long: Phosphoribosyl-ATP pyrophosphatase (87 aa).

The protein belongs to the PRA-PH family.

The protein resides in the cytoplasm. The enzyme catalyses 1-(5-phospho-beta-D-ribosyl)-ATP + H2O = 1-(5-phospho-beta-D-ribosyl)-5'-AMP + diphosphate + H(+). The protein operates within amino-acid biosynthesis; L-histidine biosynthesis; L-histidine from 5-phospho-alpha-D-ribose 1-diphosphate: step 2/9. This Paenarthrobacter aurescens (strain TC1) protein is Phosphoribosyl-ATP pyrophosphatase.